Reading from the N-terminus, the 277-residue chain is MVVKIGILKCGNIGMSPVVDLCLDERADRNDIDVRVLGSGAKMGPEQVEEVAKKMVEEIKPDFIVYIGPNPAAPGPKKAREILSAGGIPAVIIGDAPGIKDKDAMAEEGLGYVLIKCDPMIGARRQFLDPVEMAMFNADVIRVLAGTGALRVVQNAIDDMVFAVEEGKEIPLPKIVITEQKAVEAMDFANPYAKAKAMAAFVMAEKVADIDVKGCFMTKEMEKYIPIVASAHETIRYAAKLVDEARELEKATDAVSRKPHAGAGKILNKCKLMEKPE.

Belongs to the MTD family.

It carries out the reaction 5,10-methylenetetrahydromethanopterin + oxidized coenzyme F420-(gamma-L-Glu)(n) + 2 H(+) = 5,10-methenyl-5,6,7,8-tetrahydromethanopterin + reduced coenzyme F420-(gamma-L-Glu)(n). It functions in the pathway one-carbon metabolism; methanogenesis from CO(2); 5,10-methylene-5,6,7,8-tetrahydromethanopterin from 5,10-methenyl-5,6,7,8-tetrahydromethanopterin (coenzyme F420 route): step 1/1. Its function is as follows. Catalyzes the reversible reduction of methenyl-H(4)MPT(+) to methylene-H(4)MPT. This is F420-dependent methylenetetrahydromethanopterin dehydrogenase from Methanococcus maripaludis (strain DSM 14266 / JCM 13030 / NBRC 101832 / S2 / LL).